We begin with the raw amino-acid sequence, 1635 residues long: Cortactin-binding protein 2 (1635 aa).

Disordered stretches follow at residues 1–20, 193–219, 264–469, and 483–582; these read MATA…ARTS, ASKL…KSSQ, EQLR…DNLV, and SRFT…PHGI. Residues 116 to 273 are a coiled coil; it reads RKMQERMSAQ…EQLRKGNDHK (158 aa). Composition is skewed to basic and acidic residues over residues 193–205 and 264–274; these read ASKL…KTGE and EQLRKGNDHKP. 2 stretches are compositionally biased toward low complexity: residues 320–331 and 375–395; these read PPVAVPAKPSSA and GPSS…LLNN. The span at 402-414 shows a compositional bias: polar residues; the sequence is SQNHSLTSSTPNL. The span at 439-453 shows a compositional bias: low complexity; that stretch reads QGNANDQDQNGNTTQ. Polar residues predominate over residues 454–466; the sequence is SPPSREVSPTSRD. Asymmetric dimethylarginine is present on Arg484. 6 ANK repeats span residues 697-727, 731-760, 764-793, 797-826, 830-859, and 893-923; these read GRPT…DINH, DGSS…QVDD, NGFT…DINH, GGQT…DRSI, DGWT…PESE, and EGWT…EAER. Positions 856-876 are disordered; it reads PESENSGSKDQTGLGSREESR. Polar residues predominate over residues 858-869; it reads SENSGSKDQTGL. The interval 1420 to 1469 is disordered; that stretch reads SHRKKGESGSWRKVNTSPRKKSGLSSSQTWTKQEATKDGVRNDTGHQNGN. Residues 1432–1452 show a composition bias toward polar residues; it reads KVNTSPRKKSGLSSSQTWTKQ. The segment covering 1453–1463 has biased composition (basic and acidic residues); sequence EATKDGVRNDT. Ser1498 bears the Phosphoserine mark. The disordered stretch occupies residues 1531–1624; sequence RMFGSSRTDP…RQREINNNLK (94 aa). Polar residues-rich tracts occupy residues 1546-1555 and 1563-1577; these read PTMSDRSLPS and LSSN…NTPK. Over residues 1615-1624 the composition is skewed to basic and acidic residues; the sequence is RQREINNNLK.

In terms of assembly, interacts with CTTN/cortactin SH3 domain. Interacts with STRN, STRN4/zinedin and MOB4/phocein; this interactions mediate the association with the STRIPAK core complex and may regulate dendritic spine distribution of the STRIPAK complex in hippocampal neurons. Activation of glutamate receptors weakens the interaction with STRN and STRN4.

The protein localises to the cytoplasm. Its subcellular location is the cell cortex. The protein resides in the cell projection. It is found in the dendritic spine. In terms of biological role, regulates the dendritic spine distribution of CTTN/cortactin in hippocampal neurons, and thus controls dendritic spinogenesis and dendritic spine maintenance. Associates with the striatin-interacting phosphatase and kinase (STRIPAK) core complex to regulate dendritic spine distribution of the STRIPAK complex in hippocampal neurons. The sequence is that of Cortactin-binding protein 2 (CTTNBP2) from Ornithorhynchus anatinus (Duckbill platypus).